A 434-amino-acid chain; its full sequence is UDP-N-acetylmuramate--L-alanine ligase (434 aa).

108–114 (GSHGKTT) contributes to the ATP binding site.

Belongs to the MurCDEF family.

The protein localises to the cytoplasm. It catalyses the reaction UDP-N-acetyl-alpha-D-muramate + L-alanine + ATP = UDP-N-acetyl-alpha-D-muramoyl-L-alanine + ADP + phosphate + H(+). It functions in the pathway cell wall biogenesis; peptidoglycan biosynthesis. In terms of biological role, cell wall formation. This Geobacillus thermodenitrificans (strain NG80-2) protein is UDP-N-acetylmuramate--L-alanine ligase.